The following is a 331-amino-acid chain: UAP56-interacting factor (331 aa).

The UAP56-binding motif motif lies at 16 to 34 (APDKVDMSLDDIIRLNKKE). Disordered regions lie at residues 30–51 (LNKK…LQKG), 63–99 (RARG…RRRG), and 158–193 (GQRR…TQRE). A compositionally biased stretch (polar residues) spans 166-175 (TDIQRGLNST).

The protein belongs to the UIF family.

It localises to the nucleus. The protein resides in the nucleoplasm. Its subcellular location is the nucleus speckle. Functionally, required for mRNA export from the nucleus to the cytoplasm. Acts as an adapter that uses the ddx39b/uap56-nfx1 pathway to ensure efficient mRNA export and delivering to the nuclear pore. This is UAP56-interacting factor (fyttd1) from Salmo salar (Atlantic salmon).